A 353-amino-acid chain; its full sequence is Guanine nucleotide-binding protein subunit alpha (353 aa).

Positions 1-21 (MGCGMSTEEKEGKARNEEIEN) are disordered. Glycine 2 carries N-myristoyl glycine lipidation. The S-palmitoyl cysteine moiety is linked to residue cysteine 3. The segment covering 7-21 (TEEKEGKARNEEIEN) has biased composition (basic and acidic residues). The region spanning 32–353 (NEIKMLLLGA…QENLRLCGLI (322 aa)) is the G-alpha domain. The segment at 35-48 (KMLLLGAGESGKST) is G1 motif. 14 residues coordinate GTP: glutamate 43, serine 44, glycine 45, lysine 46, serine 47, threonine 48, aspartate 150, leucine 175, threonine 181, glycine 203, asparagine 269, lysine 270, aspartate 272, and alanine 325. Residue serine 47 participates in Mg(2+) binding. Positions 173–181 (DVLRSRVKT) are G2 motif. Threonine 181 serves as a coordination point for Mg(2+). Residues 196–205 (YRMFDVGGQR) form a G3 motif region. Residues 265–272 (ILFLNKID) are G4 motif. The tract at residues 323 to 328 (TCATDT) is G5 motif.

It belongs to the G-alpha family. G(q) subfamily. G proteins are composed of 3 units; alpha, beta and gamma. The alpha chain contains the guanine nucleotide binding site. Requires Mg(2+) as cofactor.

Guanine nucleotide-binding proteins (G proteins) are involved as modulators or transducers in various transmembrane signaling systems. Plays a role in pathogenicity, specifically in appressorium formation in rice blast disease. Also involved in mating. The chain is Guanine nucleotide-binding protein subunit alpha (MAGB) from Pyricularia oryzae (strain 70-15 / ATCC MYA-4617 / FGSC 8958) (Rice blast fungus).